The sequence spans 232 residues: Eukaryotic translation initiation factor NCBP (232 aa).

Basic and acidic residues predominate over residues 1 to 11 (MEPAVERKVPE). The interval 1–49 (MEPAVERKVPEQEEQLQPSHARAEDAPPAAVEEEDEAEAEESERRNREL) is disordered. Residues 31-41 (VEEEDEAEAEE) are compositionally biased toward acidic residues.

Belongs to the eukaryotic initiation factor 4E family. In terms of assembly, EIF4F is a multi-subunit complex, the composition of which varies with external and internal environmental conditions. It is composed of at least EIF4A, EIF4E and EIF4G. EIF4E is also known to interact with other partners. In higher plants two isoforms of EIF4F have been identified, named isoform EIF4F and isoform EIF(iso)4F. Isoform EIF4F has subunits p220 and p26, whereas isoform EIF(iso)4F has subunits p82 and p28.

In terms of biological role, recognizes and binds the 7-methylguanosine-containing mRNA cap during an early step in the initiation of protein synthesis and facilitates ribosome binding by inducing the unwinding of the mRNAs secondary structures. The protein is Eukaryotic translation initiation factor NCBP (NCBP) of Triticum aestivum (Wheat).